Consider the following 423-residue polypeptide: MLDMKKIRQNVEVVQKKLKTRGVDEEVLLRFLALDEGRRALLVKVEELKKHRNQVSGEIAQLKRAQKDASQQLLNMQEVSEQIKVLDQEVVHLQEQCTAIAERLPNLPHESVPVGADEAANVEVRRWSTPKTFSFEPKPHWEIGEALGILDFERGAKVSGSRFLYYKGLGARLERAVYNFMLDQHVNEHGYTEVIPPYLVNSKAMFGTGQFPKFKEDVFQVAESDLTLIPTAEVPLTNYYNNEILDAQELPIYFTALSPSFRSEAGSAGRDTRGLIRLHQFHKVEMVKFSDAEHSYEELEKMTNNAGDILEKLGLPYRVITLSTGDMGFSAAKTYDLEVWIPAQKTYREISSCSNCEDFQARRALIRYRDKTGHVQYAHTLNGSGLAVGRTVAAILENYQNEDGTVTIPEVLRPYMGGLTKID.

231–233 (TAE) lines the L-serine pocket. 262 to 264 (RSE) contacts ATP. Glu-285 provides a ligand contact to L-serine. Position 349-352 (349-352 (EISS)) interacts with ATP. Ser-384 contributes to the L-serine binding site.

This sequence belongs to the class-II aminoacyl-tRNA synthetase family. Type-1 seryl-tRNA synthetase subfamily. In terms of assembly, homodimer. The tRNA molecule binds across the dimer.

The protein localises to the cytoplasm. It carries out the reaction tRNA(Ser) + L-serine + ATP = L-seryl-tRNA(Ser) + AMP + diphosphate + H(+). The catalysed reaction is tRNA(Sec) + L-serine + ATP = L-seryl-tRNA(Sec) + AMP + diphosphate + H(+). Its pathway is aminoacyl-tRNA biosynthesis; selenocysteinyl-tRNA(Sec) biosynthesis; L-seryl-tRNA(Sec) from L-serine and tRNA(Sec): step 1/1. Functionally, catalyzes the attachment of serine to tRNA(Ser). Is also able to aminoacylate tRNA(Sec) with serine, to form the misacylated tRNA L-seryl-tRNA(Sec), which will be further converted into selenocysteinyl-tRNA(Sec). This chain is Serine--tRNA ligase 1, found in Enterococcus faecalis (strain ATCC 700802 / V583).